The sequence spans 170 residues: Large ribosomal subunit protein uL22c (170 aa).

The protein belongs to the universal ribosomal protein uL22 family. Part of the 50S ribosomal subunit.

The protein resides in the plastid. It localises to the chloroplast. This protein binds specifically to 23S rRNA. Its function is as follows. The globular domain of the protein is located near the polypeptide exit tunnel on the outside of the subunit, while an extended beta-hairpin is found that lines the wall of the exit tunnel in the center of the 70S ribosome. This chain is Large ribosomal subunit protein uL22c (rpl22), found in Nandina domestica (Heavenly bamboo).